A 232-amino-acid polypeptide reads, in one-letter code: Enolase-phosphatase E1 (232 aa).

Belongs to the HAD-like hydrolase superfamily. MasA/MtnC family. As to quaternary structure, monomer. It depends on Mg(2+) as a cofactor.

It carries out the reaction 5-methylsulfanyl-2,3-dioxopentyl phosphate + H2O = 1,2-dihydroxy-5-(methylsulfanyl)pent-1-en-3-one + phosphate. The protein operates within amino-acid biosynthesis; L-methionine biosynthesis via salvage pathway; L-methionine from S-methyl-5-thio-alpha-D-ribose 1-phosphate: step 3/6. It participates in amino-acid biosynthesis; L-methionine biosynthesis via salvage pathway; L-methionine from S-methyl-5-thio-alpha-D-ribose 1-phosphate: step 4/6. Bifunctional enzyme that catalyzes the enolization of 2,3-diketo-5-methylthiopentyl-1-phosphate (DK-MTP-1-P) into the intermediate 2-hydroxy-3-keto-5-methylthiopentenyl-1-phosphate (HK-MTPenyl-1-P), which is then dephosphorylated to form the acireductone 1,2-dihydroxy-3-keto-5-methylthiopentene (DHK-MTPene). This Sorangium cellulosum (strain So ce56) (Polyangium cellulosum (strain So ce56)) protein is Enolase-phosphatase E1.